The primary structure comprises 330 residues: L-lactate dehydrogenase (330 aa).

Residues Val31, Asp52, Lys57, and 96 to 97 (GA) each bind NAD(+). Residues Gln99, Arg105, and 137-140 (NPVD) contribute to the substrate site. NAD(+) is bound by residues 135–137 (VSN) and Ser160. 165–168 (DTAR) provides a ligand contact to substrate. Beta-D-fructose 1,6-bisphosphate-binding residues include Arg170 and His185. The active-site Proton acceptor is His192. Phosphotyrosine is present on Tyr238. Residue Thr247 coordinates substrate.

Belongs to the LDH/MDH superfamily. LDH family. As to quaternary structure, homotetramer.

The protein resides in the cytoplasm. It catalyses the reaction (S)-lactate + NAD(+) = pyruvate + NADH + H(+). Its pathway is fermentation; pyruvate fermentation to lactate; (S)-lactate from pyruvate: step 1/1. With respect to regulation, allosterically activated by fructose 1,6-bisphosphate (FBP). Functionally, catalyzes the conversion of lactate to pyruvate. The polypeptide is L-lactate dehydrogenase (Gloeobacter violaceus (strain ATCC 29082 / PCC 7421)).